Reading from the N-terminus, the 365-residue chain is Snurportin-1 (365 aa).

Residues 10 to 72 (GGVALAAPNS…RLAEGDWAGV (63 aa)) enclose the IBB domain. Disordered stretches follow at residues 15-34 (AAPN…KGRG) and 69-90 (WAGV…EMEV). Residues 73–90 (ESDEDGGEDGDGEEEMEV) are compositionally biased toward acidic residues. The tract at residues 129 to 131 (GKR) is interaction with m3G-cap structure. The interval 211 to 333 (LSSKIQEEEG…GKAQPSAEAA (123 aa)) is necessary for binding to the m3G-cap structure. The disordered stretch occupies residues 317–365 (RSKKLAAGKAQPSAEAAARNGHYELEHLSTPQPANSAQGQEEAGSQMEN). The segment covering 345 to 355 (STPQPANSAQG) has biased composition (polar residues).

Belongs to the snurportin family.

It is found in the nucleus. The protein resides in the cytoplasm. In terms of biological role, functions as an U snRNP-specific nuclear import adapter. Involved in the trimethylguanosine (m3G)-cap-dependent nuclear import of U snRNPs. Binds specifically to the terminal m3G-cap U snRNAs. The polypeptide is Snurportin-1 (SNUPN) (Gallus gallus (Chicken)).